The chain runs to 82 residues: uncharacterized protein (82 aa).

This is an uncharacterized protein from Autographa californica nuclear polyhedrosis virus (AcMNPV).